Consider the following 451-residue polypeptide: GTPase Der (451 aa).

EngA-type G domains lie at 5 to 170 (PVVA…VAPP) and 186 to 359 (IKLA…AAAF). GTP is bound by residues 11–18 (GRPNVGKS), 58–62 (DTGGF), 122–125 (NKAE), 192–199 (GRPNVGKS), 239–243 (DTAGL), and 304–307 (NKWD). In terms of domain architecture, KH-like spans 360-444 (AKLSTPRLTR…PLRIEFKSSR (85 aa)).

This sequence belongs to the TRAFAC class TrmE-Era-EngA-EngB-Septin-like GTPase superfamily. EngA (Der) GTPase family. In terms of assembly, associates with the 50S ribosomal subunit.

In terms of biological role, GTPase that plays an essential role in the late steps of ribosome biogenesis. The protein is GTPase Der of Bordetella bronchiseptica (strain ATCC BAA-588 / NCTC 13252 / RB50) (Alcaligenes bronchisepticus).